The primary structure comprises 517 residues: GMP synthase [glutamine-hydrolyzing] (517 aa).

The region spanning 11–202 (KIIVLDFGSQ…AFDVCGAKDN (192 aa)) is the Glutamine amidotransferase type-1 domain. Cysteine 88 serves as the catalytic Nucleophile. Active-site residues include histidine 176 and glutamate 178. One can recognise a GMPS ATP-PPase domain in the interval 203-392 (WTMDDFIKLS…LGLPHDLVWR (190 aa)). Residue 230 to 236 (SGGVDSS) coordinates ATP.

Homodimer.

The enzyme catalyses XMP + L-glutamine + ATP + H2O = GMP + L-glutamate + AMP + diphosphate + 2 H(+). The protein operates within purine metabolism; GMP biosynthesis; GMP from XMP (L-Gln route): step 1/1. Catalyzes the synthesis of GMP from XMP. The sequence is that of GMP synthase [glutamine-hydrolyzing] from Lactobacillus delbrueckii subsp. bulgaricus (strain ATCC 11842 / DSM 20081 / BCRC 10696 / JCM 1002 / NBRC 13953 / NCIMB 11778 / NCTC 12712 / WDCM 00102 / Lb 14).